We begin with the raw amino-acid sequence, 188 residues long: Elongation factor P (188 aa).

This sequence belongs to the elongation factor P family.

Its subcellular location is the cytoplasm. It functions in the pathway protein biosynthesis; polypeptide chain elongation. In terms of biological role, involved in peptide bond synthesis. Stimulates efficient translation and peptide-bond synthesis on native or reconstituted 70S ribosomes in vitro. Probably functions indirectly by altering the affinity of the ribosome for aminoacyl-tRNA, thus increasing their reactivity as acceptors for peptidyl transferase. This Bacteroides fragilis (strain ATCC 25285 / DSM 2151 / CCUG 4856 / JCM 11019 / LMG 10263 / NCTC 9343 / Onslow / VPI 2553 / EN-2) protein is Elongation factor P.